Here is a 658-residue protein sequence, read N- to C-terminus: Aspartate--tRNA ligase, mitochondrial (658 aa).

Residue Glu-198 coordinates L-aspartate. Residues 226–229 (QQYK) are aspartate. Arg-248 contacts L-aspartate. ATP is bound by residues 248 to 250 (RDE) and Glu-553. Residue Arg-560 participates in L-aspartate binding. Residue 604-607 (GFDR) coordinates ATP.

The protein belongs to the class-II aminoacyl-tRNA synthetase family. Type 1 subfamily.

The protein resides in the mitochondrion matrix. The enzyme catalyses tRNA(Asp) + L-aspartate + ATP = L-aspartyl-tRNA(Asp) + AMP + diphosphate. In terms of biological role, catalyzes the attachment of aspartate to tRNA(Asp) in the mitochondrion. This chain is Aspartate--tRNA ligase, mitochondrial (MSD1), found in Saccharomyces cerevisiae (strain ATCC 204508 / S288c) (Baker's yeast).